A 62-amino-acid chain; its full sequence is Alpha-conotoxin-like S1.1 (62 aa).

Positions 1 to 21 (MGMRMMFTVFLLVVLAITVVS) are cleaved as a signal peptide. Positions 22–48 (FPLDRESDGANAEARTHDHEKHALDRN) are excised as a propeptide. Cystine bridges form between Cys-50/Cys-56 and Cys-51/Cys-61. Residue Cys-61 is modified to Cysteine amide.

This sequence belongs to the conotoxin A superfamily. As to expression, expressed by the venom duct.

The protein localises to the secreted. In terms of biological role, alpha-conotoxins act on postsynaptic membranes, they bind to the nicotinic acetylcholine receptors (nAChR) and thus inhibit them. The protein is Alpha-conotoxin-like S1.1 of Conus striatus (Striated cone).